A 534-amino-acid polypeptide reads, in one-letter code: CTP synthase (534 aa).

An amidoligase domain region spans residues 1-267 (MTKYIFVTGG…DQIVCDHLKL (267 aa)). Serine 13 contacts CTP. Serine 13 contacts UTP. Residue 14–19 (SIGKGI) coordinates ATP. Position 54 (tyrosine 54) interacts with L-glutamine. Aspartate 71 serves as a coordination point for ATP. 2 residues coordinate Mg(2+): aspartate 71 and glutamate 141. Residues 148–150 (DIE), 188–193 (KTKPTQ), and lysine 224 each bind CTP. UTP is bound by residues 188–193 (KTKPTQ) and lysine 224. One can recognise a Glutamine amidotransferase type-1 domain in the interval 292–534 (KIALVGKYVE…FVTAAVENMK (243 aa)). Residue glycine 354 participates in L-glutamine binding. The active-site Nucleophile; for glutamine hydrolysis is the cysteine 381. L-glutamine is bound by residues 382–385 (LGMQ), glutamate 405, and arginine 463. Residues histidine 508 and glutamate 510 contribute to the active site.

The protein belongs to the CTP synthase family. In terms of assembly, homotetramer.

It carries out the reaction UTP + L-glutamine + ATP + H2O = CTP + L-glutamate + ADP + phosphate + 2 H(+). The enzyme catalyses L-glutamine + H2O = L-glutamate + NH4(+). It catalyses the reaction UTP + NH4(+) + ATP = CTP + ADP + phosphate + 2 H(+). The protein operates within pyrimidine metabolism; CTP biosynthesis via de novo pathway; CTP from UDP: step 2/2. With respect to regulation, allosterically activated by GTP, when glutamine is the substrate; GTP has no effect on the reaction when ammonia is the substrate. The allosteric effector GTP functions by stabilizing the protein conformation that binds the tetrahedral intermediate(s) formed during glutamine hydrolysis. Inhibited by the product CTP, via allosteric rather than competitive inhibition. Catalyzes the ATP-dependent amination of UTP to CTP with either L-glutamine or ammonia as the source of nitrogen. Regulates intracellular CTP levels through interactions with the four ribonucleotide triphosphates. This Streptococcus agalactiae serotype V (strain ATCC BAA-611 / 2603 V/R) protein is CTP synthase.